A 341-amino-acid polypeptide reads, in one-letter code: Aspartate carbamoyltransferase catalytic subunit (341 aa).

2 residues coordinate carbamoyl phosphate: Arg-89 and Thr-90. Lys-117 provides a ligand contact to L-aspartate. Positions 139, 169, and 172 each coordinate carbamoyl phosphate. Residues Arg-202 and Arg-257 each coordinate L-aspartate. Positions 298 and 299 each coordinate carbamoyl phosphate.

This sequence belongs to the aspartate/ornithine carbamoyltransferase superfamily. ATCase family. Heterododecamer (2C3:3R2) of six catalytic PyrB chains organized as two trimers (C3), and six regulatory PyrI chains organized as three dimers (R2).

The catalysed reaction is carbamoyl phosphate + L-aspartate = N-carbamoyl-L-aspartate + phosphate + H(+). It functions in the pathway pyrimidine metabolism; UMP biosynthesis via de novo pathway; (S)-dihydroorotate from bicarbonate: step 2/3. Its function is as follows. Catalyzes the condensation of carbamoyl phosphate and aspartate to form carbamoyl aspartate and inorganic phosphate, the committed step in the de novo pyrimidine nucleotide biosynthesis pathway. The sequence is that of Aspartate carbamoyltransferase catalytic subunit from Paraburkholderia phytofirmans (strain DSM 17436 / LMG 22146 / PsJN) (Burkholderia phytofirmans).